The primary structure comprises 2140 residues: Dedicator of cytokinesis protein 7 (2140 aa).

Phosphoserine occurs at positions 30, 180, and 182. Residues 138–183 are disordered; it reads FNPNTLDKQKERQKGLPKQVFESDEAPDGNSYQDDQDDLKRRSMSI. A coiled-coil region spans residues 365 to 395; it reads FKEADATKNKEKLEKLKSQADQFCQRLGKYR. Residue Lys381 is modified to N6-methyllysine. Thr450 is subject to Phosphothreonine. A Phosphoserine modification is found at Ser452. The region spanning 561-727 is the C2 DOCK-type domain; the sequence is RNLLYIYPQS…GVFNVEVVAV (167 aa). 7 positions are modified to phosphoserine: Ser862, Ser864, Ser882, Ser888, Ser896, Ser900, and Ser905. Positions 888–901 are enriched in low complexity; sequence SLNLNRSRSLSNSN. A disordered region spans residues 888-971; sequence SLNLNRSRSL…MSSHTETSSF (84 aa). Phosphothreonine is present on residues Thr907 and Thr909. 14 positions are modified to phosphoserine: Ser910, Ser929, Ser964, Ser1383, Lys1390, Ala1394, Glu1398, Tyr1421, Ser1425, Arg1429, Ser1430, Ser1432, Ser1434, and Ser1438. Residues 943–971 show a composition bias toward polar residues; that stretch reads SNPSPSAESTQAMDRSCNRMSSHTETSSF. Residues 1678 to 2114 enclose the DOCKER domain; that stretch reads KGYQTSPDLR…LQPLINRKIP (437 aa). Lys1962 is subject to N6-acetyllysine. The stretch at 2086–2112 forms a coiled coil; that stretch reads DQKEYQRELERNYHRLKEALQPLINRK. Ser2129 bears the Phosphoserine mark.

It belongs to the DOCK family. In terms of assembly, component of the DOCK7-induced septin displacement/DISP complex, at least composed of DOCK7, LRCH3 and MYO6. Interacts with TSC1. Interacts with nucleotide-free RAC1 and RAC3. Interacts with TACC3 and CRY1. Interacts with NOD2. As to expression, widely expressed.

The protein resides in the cell projection. Its subcellular location is the axon. Functionally, functions as a guanine nucleotide exchange factor (GEF), which activates Rac1 and Rac3 Rho small GTPases by exchanging bound GDP for free GTP. Does not have a GEF activity for CDC42. Required for STMN1 'Ser-15' phosphorylation during axon formation and consequently for neuronal polarization. As part of the DISP complex, may regulate the association of septins with actin and thereby regulate the actin cytoskeleton. Has a role in pigmentation. Involved in the regulation of cortical neurogenesis through the control of radial glial cells (RGCs) proliferation versus differentiation; negatively regulates the basal-to-apical interkinetic nuclear migration of RGCs by antagonizing the microtubule growth-promoting function of TACC3. This is Dedicator of cytokinesis protein 7 (DOCK7) from Homo sapiens (Human).